Consider the following 128-residue polypeptide: Aspartate 1-decarboxylase (128 aa).

Ser-25 serves as the catalytic Schiff-base intermediate with substrate; via pyruvic acid. Ser-25 carries the post-translational modification Pyruvic acid (Ser). Thr-57 is a substrate binding site. The active-site Proton donor is the Tyr-58. 73-75 lines the substrate pocket; that stretch reads GSA.

Belongs to the PanD family. In terms of assembly, heterooctamer of four alpha and four beta subunits. Pyruvate is required as a cofactor. In terms of processing, is synthesized initially as an inactive proenzyme, which is activated by self-cleavage at a specific serine bond to produce a beta-subunit with a hydroxyl group at its C-terminus and an alpha-subunit with a pyruvoyl group at its N-terminus.

The protein resides in the cytoplasm. The catalysed reaction is L-aspartate + H(+) = beta-alanine + CO2. The protein operates within cofactor biosynthesis; (R)-pantothenate biosynthesis; beta-alanine from L-aspartate: step 1/1. Its function is as follows. Catalyzes the pyruvoyl-dependent decarboxylation of aspartate to produce beta-alanine. The polypeptide is Aspartate 1-decarboxylase (Burkholderia ambifaria (strain ATCC BAA-244 / DSM 16087 / CCUG 44356 / LMG 19182 / AMMD) (Burkholderia cepacia (strain AMMD))).